The chain runs to 92 residues: Large ribosomal subunit protein bL34m (92 aa).

A mitochondrion-targeting transit peptide spans 1–46 (MAFLARCFGCQACRSVALLSGRYLQSRVWMGLPDSWPLLSLQQARG). Ser-71 bears the Phosphoserine mark.

It belongs to the bacterial ribosomal protein bL34 family. In terms of assembly, component of the mitochondrial ribosome large subunit (39S) which comprises a 16S rRNA and about 50 distinct proteins.

Its subcellular location is the mitochondrion. The protein is Large ribosomal subunit protein bL34m (Mrpl34) of Mus musculus (Mouse).